Here is a 232-residue protein sequence, read N- to C-terminus: Small ribosomal subunit protein uS3 (232 aa).

The region spanning 39–107 is the KH type-2 domain; the sequence is IREILHKELK…DVVINIVEIR (69 aa).

Belongs to the universal ribosomal protein uS3 family. As to quaternary structure, part of the 30S ribosomal subunit. Forms a tight complex with proteins S10 and S14.

In terms of biological role, binds the lower part of the 30S subunit head. Binds mRNA in the 70S ribosome, positioning it for translation. The polypeptide is Small ribosomal subunit protein uS3 (Rhodopseudomonas palustris (strain HaA2)).